A 139-amino-acid chain; its full sequence is D-ribose pyranase (139 aa).

The active-site Proton donor is the His20. Substrate is bound by residues Asp28, His106, and Tyr128 to Asn130.

The protein belongs to the RbsD / FucU family. RbsD subfamily. In terms of assembly, homodecamer.

Its subcellular location is the cytoplasm. The catalysed reaction is beta-D-ribopyranose = beta-D-ribofuranose. It functions in the pathway carbohydrate metabolism; D-ribose degradation; D-ribose 5-phosphate from beta-D-ribopyranose: step 1/2. Its function is as follows. Catalyzes the interconversion of beta-pyran and beta-furan forms of D-ribose. This Glaesserella parasuis serovar 5 (strain SH0165) (Haemophilus parasuis) protein is D-ribose pyranase.